The following is an 89-amino-acid chain: Small ribosomal subunit protein uS15 (89 aa).

The protein belongs to the universal ribosomal protein uS15 family. Part of the 30S ribosomal subunit. Forms a bridge to the 50S subunit in the 70S ribosome, contacting the 23S rRNA.

One of the primary rRNA binding proteins, it binds directly to 16S rRNA where it helps nucleate assembly of the platform of the 30S subunit by binding and bridging several RNA helices of the 16S rRNA. Functionally, forms an intersubunit bridge (bridge B4) with the 23S rRNA of the 50S subunit in the ribosome. This Buchnera aphidicola subsp. Acyrthosiphon pisum (strain 5A) protein is Small ribosomal subunit protein uS15.